A 310-amino-acid chain; its full sequence is Carbamate kinase (310 aa).

It belongs to the carbamate kinase family.

Its subcellular location is the cytoplasm. The enzyme catalyses hydrogencarbonate + NH4(+) + ATP = carbamoyl phosphate + ADP + H2O + H(+). It participates in metabolic intermediate metabolism; carbamoyl phosphate degradation; CO(2) and NH(3) from carbamoyl phosphate: step 1/1. In Staphylococcus epidermidis (strain ATCC 35984 / DSM 28319 / BCRC 17069 / CCUG 31568 / BM 3577 / RP62A), this protein is Carbamate kinase (arcC).